The primary structure comprises 290 residues: Putative beta-lactamase HcpC (290 aa).

A signal peptide spans 1 to 25 (MLENVKKSLFRVLCLGALCLGGLMA). TPR repeat units lie at residues 29-62 (PKELVGLGAKSYKEQDFTQAKKYFEKACDLKENS), 64-98 (CFNLGVLYYQGHGVEKNLKKAASFYSKACDLNYSN), 100-133 (CHLLGNLYYSGQGVSQNTNKALQYYSKACDLKYA), 134-170 (EGCASLGGIYHDGKVVTRDFKKAVEYFTKACDLNDGD), 172-205 (CTILGSLYDAGRGTPKDLKKALASYDKACDLKDS), 206-242 (PGCFNAGNMYHHGEGAAKNFKEALARYSKACELENGG), and 244-278 (CFNLGAMQYNGEGATRNEKQAIENFKKGCKLGAKG). Cystine bridges form between Cys56/Cys64, Cys92/Cys100, Cys128/Cys136, Cys164/Cys172, Cys200/Cys208, Cys236/Cys244, and Cys272/Cys280.

The protein belongs to the hcp beta-lactamase family.

It localises to the secreted. It carries out the reaction a beta-lactam + H2O = a substituted beta-amino acid. In terms of biological role, may hydrolyze 6-aminopenicillinic acid and 7-aminocephalosporanic acid (ACA) derivatives. This is Putative beta-lactamase HcpC (hcpC) from Helicobacter pylori (strain J99 / ATCC 700824) (Campylobacter pylori J99).